The chain runs to 408 residues: uncharacterized protein (408 aa).

A divalent metal cation contacts are provided by Glu35, Asp61, and Asn96.

Belongs to the metallophosphoesterase superfamily. A divalent metal cation serves as cofactor.

This is an uncharacterized protein from Bacillus subtilis (strain 168).